The primary structure comprises 407 residues: Peptidase T (407 aa).

Residue H82 participates in Zn(2+) binding. D84 is an active-site residue. Residue D143 coordinates Zn(2+). E177 functions as the Proton acceptor in the catalytic mechanism. Residues E178, D200, and H382 each coordinate Zn(2+).

The protein belongs to the peptidase M20B family. The cofactor is Zn(2+).

Its subcellular location is the cytoplasm. It catalyses the reaction Release of the N-terminal residue from a tripeptide.. Its function is as follows. Cleaves the N-terminal amino acid of tripeptides. The polypeptide is Peptidase T (Streptococcus pyogenes serotype M2 (strain MGAS10270)).